A 245-amino-acid polypeptide reads, in one-letter code: 5'-nucleotidase SurE (245 aa).

A divalent metal cation-binding residues include aspartate 8, aspartate 9, serine 39, and asparagine 97.

The protein belongs to the SurE nucleotidase family. The cofactor is a divalent metal cation.

The protein localises to the cytoplasm. The catalysed reaction is a ribonucleoside 5'-phosphate + H2O = a ribonucleoside + phosphate. Nucleotidase that shows phosphatase activity on nucleoside 5'-monophosphates. In Clostridium kluyveri (strain NBRC 12016), this protein is 5'-nucleotidase SurE.